The primary structure comprises 432 residues: Adenylosuccinate synthetase (432 aa).

GTP-binding positions include 12–18 (GDEGKGK) and 40–42 (GHT). Residue Asp-13 is the Proton acceptor of the active site. Mg(2+)-binding residues include Asp-13 and Gly-40. IMP is bound by residues 13–16 (DEGK), 38–41 (NAGH), Thr-132, Arg-146, Gln-226, Thr-241, and Arg-305. The active-site Proton donor is the His-41. 301 to 307 (VVTGRKR) contacts substrate. GTP is bound by residues Arg-307, 333–335 (KLD), and 415–417 (STS).

It belongs to the adenylosuccinate synthetase family. Homodimer. It depends on Mg(2+) as a cofactor.

It is found in the cytoplasm. It carries out the reaction IMP + L-aspartate + GTP = N(6)-(1,2-dicarboxyethyl)-AMP + GDP + phosphate + 2 H(+). It functions in the pathway purine metabolism; AMP biosynthesis via de novo pathway; AMP from IMP: step 1/2. Functionally, plays an important role in the de novo pathway of purine nucleotide biosynthesis. Catalyzes the first committed step in the biosynthesis of AMP from IMP. The polypeptide is Adenylosuccinate synthetase (Rhizobium johnstonii (strain DSM 114642 / LMG 32736 / 3841) (Rhizobium leguminosarum bv. viciae)).